The chain runs to 601 residues: Alpha-terpineol synthase, chloroplastic (601 aa).

A chloroplast-targeting transit peptide spans 1–47 (MSTISIHHVGILRNPLHSKSKRASINKPWSLSLPRSSSASRLVEPCR). The Mn(2+) site is built by aspartate 357 and aspartate 361. Positions 357–361 (DDVYD) match the DDXXD motif motif. Homodimerization stretches follow at residues 363–369 (YGTLDEL) and 435–471 (EAEWYKSGYTPSLEEYLTIAKISIASLTILLSVELSL). Positions 499 and 507 each coordinate Mn(2+).

The protein belongs to the terpene synthase family. Homodimer. The cofactor is Mn(2+). Mg(2+) serves as cofactor.

The protein localises to the plastid. Its subcellular location is the chloroplast. The enzyme catalyses (2E)-geranyl diphosphate + H2O = (S)-alpha-terpineol + diphosphate. It catalyses the reaction (2E)-geranyl diphosphate + H2O = (R)-alpha-terpineol + diphosphate. Its pathway is secondary metabolite biosynthesis; terpenoid biosynthesis. Its function is as follows. Involved in the biosynthesis of phenolic monoterpenes natural products. Monoterpene synthase which catalyzes the conversion of geranyl diphosphate (GPP) to alpha-terpineol (isomer is not determined). The sequence is that of Alpha-terpineol synthase, chloroplastic from Thymus caespititius (Cretan thyme).